The primary structure comprises 355 residues: NAD-dependent protein deacylase sirtuin-6 (355 aa).

At Ser2 the chain carries N-acetylserine. Position 10 is a phosphoserine (Ser10). The Deacetylase sirtuin-type domain maps to 27–272 (PEELERKVWE…TQLMKHLGLE (246 aa)). Lys33 bears the N6-acetyllysine mark. Residues Ala53, Thr57, Phe64, Arg65, Trp71, Gln113, and His133 each coordinate NAD(+). His133 serves as the catalytic Proton acceptor. Zn(2+) is bound by residues Cys141, Cys144, and Cys166. Residue Lys170 forms a Glycyl lysine isopeptide (Lys-Gly) (interchain with G-Cter in ubiquitin) linkage. Position 177 (Cys177) interacts with Zn(2+). NAD(+) contacts are provided by Gly214, Ser216, Asn240, Gln242, and Val258. Positions 284–355 (KALPPLPRPP…KRVKAEVTPS (72 aa)) are disordered. The span at 287–296 (PPLPRPPTPK) shows a compositional bias: pro residues. At Thr294 the chain carries Phosphothreonine. A phosphoserine mark is found at Ser303 and Ser330.

It belongs to the sirtuin family. Class IV subfamily. Homodimer; binds to nucleosomes and DNA ends as a homodimer. Interacts with RELA; interferes with RELA binding to target DNA. Interacts with SMARCA5; promoting recruitment of SMARCA5/SNF2H to double-strand breaks (DSBs) sites. Interacts with the mTORC2 complex; preventing the ability of SIRT6 to deacetylate FOXO1. Interacts with the CLOCK-BMAL1 complex; recruited by the CLOCK-BMAL1 complex to regulate expression of clock-controlled genes. Interacts with CSNK2A2; preventing CSNK2A2 localization to the nucleus. Acetylated at Lys-33. Deacetylation at Lys-33 by SIRT1 promotes homomultimerization and binding to double-strand breaks (DSBs) sites. In terms of processing, phosphorylation at Ser-10 by MAPK8/JNK1 in response to oxidative stress stimulates the mono-ADP-ribosyltransferase activity on PARP1, leading to PARP1 recruitment to double-strand breaks (DSBs). Post-translationally, monoubiquitinated at Lys-170 by STUB1/CHIP, preventing its degradation by the proteasome. Sumoylated, leading to specifically decrease ability to deacetylate histone H3 at 'Lys-56' (H3K56ac).

It localises to the nucleus. Its subcellular location is the chromosome. The protein resides in the telomere. It is found in the endoplasmic reticulum. It carries out the reaction N(6)-acetyl-L-lysyl-[protein] + NAD(+) + H2O = 2''-O-acetyl-ADP-D-ribose + nicotinamide + L-lysyl-[protein]. The catalysed reaction is N(6)-tetradecanoyl-L-lysyl-[protein] + NAD(+) + H2O = 2''-O-tetradecanoyl-ADP-D-ribose + nicotinamide + L-lysyl-[protein]. The enzyme catalyses N(6)-hexadecanoyl-L-lysyl-[protein] + NAD(+) + H2O = 2''-O-hexadecanoyl-ADP-D-ribose + nicotinamide + L-lysyl-[protein]. It catalyses the reaction L-lysyl-[protein] + NAD(+) = N(6)-(ADP-D-ribosyl)-L-lysyl-[protein] + nicotinamide + H(+). It carries out the reaction L-arginyl-[protein] + NAD(+) = N(omega)-(ADP-D-ribosyl)-L-arginyl-[protein] + nicotinamide + H(+). Compared to the defatty-acylase activity, the protein deacetylase activity is weak in vitro, and requires activation. The histone deacetylase activity is strongly activated upon binding to nucleosomes and chromatin in vivo. Two molecules of SIRT6 associate with the acidic patch of one nucleosome, while the C-terminal disordered region of SIRT6 associates with nucleosomal DNA, leading to efficient histone deacetylation. The protein-lysine deacetylase activity is also activated by long-chain free fatty-acids. In terms of biological role, NAD-dependent protein deacetylase, deacylase and mono-ADP-ribosyltransferase that plays an essential role in DNA damage repair, telomere maintenance, metabolic homeostasis, inflammation, tumorigenesis and aging. Displays protein-lysine deacetylase or defatty-acylase (demyristoylase and depalmitoylase) activity, depending on the context. Acts as a key histone deacetylase by catalyzing deacetylation of histone H3 at 'Lys-9', 'Lys-18' and 'Lys-56' (H3K9ac, H3K18ac and H3K56ac, respectively), suppressing target gene expression of several transcription factors, including NF-kappa-B. Acts as an inhibitor of transcription elongation by mediating deacetylation of H3K9ac and H3K56ac, preventing release of NELFE from chromatin and causing transcriptional pausing. Involved in DNA repair by promoting double-strand break (DSB) repair: acts as a DSB sensor by recognizing and binding DSB sites, leading to (1) recruitment of DNA repair proteins, such as SMARCA5/SNF2H, and (2) deacetylation of histone H3K9ac and H3K56ac. SIRT6 participation to DSB repair is probably involved in extension of life span. Also promotes DNA repair by deacetylating non-histone proteins, such as DDB2 and p53/TP53. Specifically deacetylates H3K18ac at pericentric heterochromatin, thereby maintaining pericentric heterochromatin silencing at centromeres and protecting against genomic instability and cellular senescence. Involved in telomere maintenance by catalyzing deacetylation of histone H3 in telomeric chromatin, regulating telomere position effect and telomere movement in response to DNA damage. Required for embryonic stem cell differentiation by mediating histone deacetylation of H3K9ac. Plays a major role in metabolism by regulating processes such as glycolysis, gluconeogenesis, insulin secretion and lipid metabolism. Inhibits glycolysis via histone deacetylase activity and by acting as a corepressor of the transcription factor HIF1A, thereby controlling the expression of multiple glycolytic genes. Has tumor suppressor activity by repressing glycolysis, thereby inhibiting the Warburg effect. Also regulates glycolysis and tumorigenesis by mediating deacetylation and nuclear export of non-histone proteins, such as isoform M2 of PKM (PKM2). Acts as a negative regulator of gluconeogenesis by mediating deacetylation of non-histone proteins, such as FOXO1 and KAT2A/GCN5. Promotes beta-oxidation of fatty acids during fasting by catalyzing deacetylation of NCOA2, inducing coactivation of PPARA. Acts as a regulator of lipid catabolism in brown adipocytes, both by catalyzing deacetylation of histones and non-histone proteins, such as FOXO1. Also acts as a regulator of circadian rhythms, both by regulating expression of clock-controlled genes involved in lipid and carbohydrate metabolism, and by catalyzing deacetylation of PER2. The defatty-acylase activity is specifically involved in regulation of protein secretion. Has high activity toward long-chain fatty acyl groups and mediates protein-lysine demyristoylation and depalmitoylation of target proteins, such as RRAS2 and TNF, thereby regulating their secretion. Also acts as a mono-ADP-ribosyltransferase by mediating mono-ADP-ribosylation of PARP1, TRIM28/KAP1 or SMARCC2/BAF170. Mono-ADP-ribosyltransferase activity is involved in DNA repair, cellular senescence, repression of LINE-1 retrotransposon elements and regulation of transcription. The chain is NAD-dependent protein deacylase sirtuin-6 from Castor canadensis (American beaver).